The following is a 122-amino-acid chain: Fluoride-specific ion channel FluC 2 (122 aa).

4 consecutive transmembrane segments (helical) span residues 4 to 24 (VAVW…RFVV), 38 to 58 (LGTL…GGLA), 63 to 83 (AALL…TWML), and 96 to 116 (AALA…FIGQ). Na(+) is bound by residues Gly-73 and Thr-76.

The protein belongs to the fluoride channel Fluc/FEX (TC 1.A.43) family.

Its subcellular location is the cell membrane. The catalysed reaction is fluoride(in) = fluoride(out). With respect to regulation, na(+) is not transported, but it plays an essential structural role and its presence is essential for fluoride channel function. Fluoride-specific ion channel. Important for reducing fluoride concentration in the cell, thus reducing its toxicity. The protein is Fluoride-specific ion channel FluC 2 of Mycolicibacterium paratuberculosis (strain ATCC BAA-968 / K-10) (Mycobacterium paratuberculosis).